The following is a 432-amino-acid chain: Probable protein phosphatase 2C 33 (432 aa).

The PPM-type phosphatase domain occupies 27–298 (GGGSERPLVR…DDTTCVVVDI (272 aa)). Mn(2+) is bound by residues Asp74, Gly75, Asp250, and Asp289.

The protein belongs to the PP2C family. Mg(2+) serves as cofactor. Mn(2+) is required as a cofactor.

It catalyses the reaction O-phospho-L-seryl-[protein] + H2O = L-seryl-[protein] + phosphate. The catalysed reaction is O-phospho-L-threonyl-[protein] + H2O = L-threonyl-[protein] + phosphate. In Oryza sativa subsp. japonica (Rice), this protein is Probable protein phosphatase 2C 33.